A 355-amino-acid chain; its full sequence is Elongation factor Ts (355 aa).

The interval 82 to 85 (TDFV) is involved in Mg(2+) ion dislocation from EF-Tu.

Belongs to the EF-Ts family.

It is found in the cytoplasm. Associates with the EF-Tu.GDP complex and induces the exchange of GDP to GTP. It remains bound to the aminoacyl-tRNA.EF-Tu.GTP complex up to the GTP hydrolysis stage on the ribosome. In Wolinella succinogenes (strain ATCC 29543 / DSM 1740 / CCUG 13145 / JCM 31913 / LMG 7466 / NCTC 11488 / FDC 602W) (Vibrio succinogenes), this protein is Elongation factor Ts.